We begin with the raw amino-acid sequence, 519 residues long: Serine/threonine-protein kinase RIO3 (519 aa).

A phosphoserine mark is found at Ser8, Ser112, Ser125, Ser127, and Ser128. Positions 122–159 are disordered; it reads FEDSDSSEDEVDWQDTRDDPYRPAKPIPTPKKGFIGKG. Positions 124-134 are enriched in acidic residues; the sequence is DSDSSEDEVDW. The Protein kinase domain occupies 251–519; sequence ETITGCISTG…DGSPPVLSAD (269 aa). Residues 257-265 and Lys290 contribute to the ATP site; that span reads ISTGKESVV. Asp406 functions as the Proton acceptor in the catalytic mechanism. Ser512 bears the Phosphoserine mark.

It belongs to the protein kinase superfamily. RIO-type Ser/Thr kinase family. In terms of assembly, interacts with CASP10. Interacts with IRF3; RIOK3 probably mediates the interaction of TBK1 with IRF3. Associated with 40S pre-ribosomal particles. It depends on Mg(2+) as a cofactor. Autophosphorylated (in vitro).

Its subcellular location is the cytoplasm. It carries out the reaction L-seryl-[protein] + ATP = O-phospho-L-seryl-[protein] + ADP + H(+). The enzyme catalyses L-threonyl-[protein] + ATP = O-phospho-L-threonyl-[protein] + ADP + H(+). In terms of biological role, involved in regulation of type I interferon (IFN)-dependent immune response which plays a critical role in the innate immune response against DNA and RNA viruses. May act as an adapter protein essential for the recruitment of TBK1 to IRF3. Phosphorylates IFIH1 on 'Ser-828' interfering with IFIH1 filament assembly on long dsRNA and resulting in attenuated IFIH1-signaling. Can inhibit CASP10 isoform 7-mediated activation of the NF-kappaB signaling pathway. May play a role in the biogenesis of the 40S ribosomal subunit. Involved in the processing of 21S pre-rRNA to the mature 18S rRNA. In Mus musculus (Mouse), this protein is Serine/threonine-protein kinase RIO3 (Riok3).